Reading from the N-terminus, the 104-residue chain is NADH-quinone oxidoreductase subunit K (104 aa).

Helical transmembrane passes span 4-24, 31-51, and 67-87; these read VPASAYLTLAIILFCIGLFGA, VIVLVCIELMLNAANLNLVAF, and LFTMAVAAAEAAVGLAILIAL.

The protein belongs to the complex I subunit 4L family. In terms of assembly, NDH-1 is composed of 14 different subunits. Subunits NuoA, H, J, K, L, M, N constitute the membrane sector of the complex.

Its subcellular location is the cell membrane. It carries out the reaction a quinone + NADH + 5 H(+)(in) = a quinol + NAD(+) + 4 H(+)(out). NDH-1 shuttles electrons from NADH, via FMN and iron-sulfur (Fe-S) centers, to quinones in the respiratory chain. The immediate electron acceptor for the enzyme in this species is believed to be a menaquinone. Couples the redox reaction to proton translocation (for every two electrons transferred, four hydrogen ions are translocated across the cytoplasmic membrane), and thus conserves the redox energy in a proton gradient. The protein is NADH-quinone oxidoreductase subunit K of Bacillus cereus (strain AH820).